A 459-amino-acid chain; its full sequence is Putrescine aminotransferase (459 aa).

Residues 150-151 (GT) and Q274 each bind pyridoxal 5'-phosphate. Residue K300 is modified to N6-(pyridoxal phosphate)lysine. T332 provides a ligand contact to pyridoxal 5'-phosphate.

Belongs to the class-III pyridoxal-phosphate-dependent aminotransferase family. Putrescine aminotransferase subfamily. The cofactor is pyridoxal 5'-phosphate.

The catalysed reaction is an alkane-alpha,omega-diamine + 2-oxoglutarate = an omega-aminoaldehyde + L-glutamate. The enzyme catalyses putrescine + 2-oxoglutarate = 1-pyrroline + L-glutamate + H2O. It catalyses the reaction cadaverine + 2-oxoglutarate = 5-aminopentanal + L-glutamate. The protein operates within amine and polyamine degradation; putrescine degradation; 4-aminobutanal from putrescine (transaminase route): step 1/1. Its function is as follows. Catalyzes the aminotransferase reaction from putrescine to 2-oxoglutarate, leading to glutamate and 4-aminobutanal, which spontaneously cyclizes to form 1-pyrroline. This is the first step in one of two pathways for putrescine degradation, where putrescine is converted into 4-aminobutanoate (gamma-aminobutyrate or GABA) via 4-aminobutanal. Also functions as a cadaverine transaminase in a a L-lysine degradation pathway to succinate that proceeds via cadaverine, glutarate and L-2-hydroxyglutarate. This is Putrescine aminotransferase from Escherichia coli O81 (strain ED1a).